We begin with the raw amino-acid sequence, 221 residues long: UPF0758 protein Ent638_0101 (221 aa).

Residues 99 to 221 form the MPN domain; sequence PLLSPEMTKD…YVSFAEQGWI (123 aa). Residues His170, His172, and Asp183 each contribute to the Zn(2+) site. Residues 170–183 carry the JAMM motif motif; the sequence is HNHPSGCAEPSKAD.

The protein belongs to the UPF0758 family. YicR subfamily.

This chain is UPF0758 protein Ent638_0101, found in Enterobacter sp. (strain 638).